We begin with the raw amino-acid sequence, 315 residues long: MKRKLKVAIIGSGNIGTDLMIKILRHGEHIEMGAMVGIDAASDGLQRAARLGVVTTHEGVEGLSRMPVFADIDIVFDATSASAHTRNDAFLRAIKPGIRFVDLTPAAIGPYCIPVVNGERHLDAPNVNMVTCGGQATIPMVAAVSRVARVRYAEIVASISSRSAGPGTRANIDEFTETTSRAIEVVGGAAVGKAIIVLNPAEPPLIMRDTVYTLSEFVDERQIEESVTRMAEAVQTYVPGYRLKQRVQFDRIDADGPIRIPGISDRMVGLKTSIYLEIEGAAHYLPAYAGNLDIMTSAAKVTAEGVANRLLANKK.

12 to 15 (SGNI) serves as a coordination point for NAD(+). Cys-132 (acyl-thioester intermediate) is an active-site residue. NAD(+) is bound by residues 163–171 (SAGPGTRAN) and Asn-291.

Belongs to the acetaldehyde dehydrogenase family.

It carries out the reaction acetaldehyde + NAD(+) + CoA = acetyl-CoA + NADH + H(+). This Paraburkholderia phymatum (strain DSM 17167 / CIP 108236 / LMG 21445 / STM815) (Burkholderia phymatum) protein is Acetaldehyde dehydrogenase 1.